Reading from the N-terminus, the 959-residue chain is DNA polymerase 1 (959 aa).

The segment at 1–110 (MRVRGGQEAA…LTLEPSPQSE (110 aa)) is disordered. A compositionally biased stretch (basic and acidic residues) spans 44 to 60 (KKPEPPPTLHREREPES).

The protein belongs to the DNA polymerase type-B family.

It catalyses the reaction DNA(n) + a 2'-deoxyribonucleoside 5'-triphosphate = DNA(n+1) + diphosphate. This chain is DNA polymerase 1 (polA), found in Aeropyrum pernix (strain ATCC 700893 / DSM 11879 / JCM 9820 / NBRC 100138 / K1).